We begin with the raw amino-acid sequence, 429 residues long: Glutamate-1-semialdehyde 2,1-aminomutase 1 (429 aa).

Lys268 carries the N6-(pyridoxal phosphate)lysine modification.

The protein belongs to the class-III pyridoxal-phosphate-dependent aminotransferase family. HemL subfamily. As to quaternary structure, homodimer. It depends on pyridoxal 5'-phosphate as a cofactor.

Its subcellular location is the cytoplasm. It carries out the reaction (S)-4-amino-5-oxopentanoate = 5-aminolevulinate. It participates in porphyrin-containing compound metabolism; protoporphyrin-IX biosynthesis; 5-aminolevulinate from L-glutamyl-tRNA(Glu): step 2/2. This Listeria welshimeri serovar 6b (strain ATCC 35897 / DSM 20650 / CCUG 15529 / CIP 8149 / NCTC 11857 / SLCC 5334 / V8) protein is Glutamate-1-semialdehyde 2,1-aminomutase 1.